We begin with the raw amino-acid sequence, 717 residues long: MQSTTNYLWHTDDLLGQGATASVYKARNKKSGEVVAVKVFNSASYRRPPEVQVREFEVLRRLNHQNIVKLFAVEETGGSRQKVLIMEYCSSGSLLSVLEDPENTFGLSEEEFLVVLRCVVAGMNHLRENGIVHRDIKPGNIMRLVGEEGQSIYKLSDFGAARKLDDDEKFVSVYGTEEYLHPDMYERAVLRKPQQKAFGVTVDLWSIGVTLYHAATGSLPFIPFGGPRRNKEIMYRITTEKPAGAISGTQKQENGPLEWSYSLPITCRLSMGLQNQLVPILANILEVEEDKCWGFDQFFAETSDILQRTVIHVFSLPQAVLHHVYIHAHNTIAIFLEAVYEQTNVTPKHQEYLFEGHPCVLEPSLSAQHIAHTAASSPLTLFSMSSDTPKGLAFRDPALDVPKFVPKVDLQADYSTAKGVLGAGYQALWLARVLLDGQALMLRGLHWVLEVLQDTCQQTLEVTRTALLYLSSSLGTERFSSGAGMPDVQERKEATELRTRLQTLSEILSKCSHNVTETQRSLSCLGEELLKNRDQIHEDNKSIQKIQCCLDKMHFIYKQFKKSRMRPGLSYNEEQIHKLDKVNFSHLAKRLLQVFQEECVQTYQVSLVTHGKRMRQVQRAQNHLHLIGHSVATCNSEARGAQESLNKIFDQLLLDRASEQGAEVSPQPMAPHPGPDPKDLVFHMQELCNDMKLLAFDLQDNNRLIERLHRVPSAPDV.

The Protein kinase domain maps to 9–315 (WHTDDLLGQG…LQRTVIHVFS (307 aa)). 15-23 (LGQGATASV) provides a ligand contact to ATP. K30 is covalently cross-linked (Glycyl lysine isopeptide (Lys-Gly) (interchain with G-Cter in ubiquitin)). K38 is an ATP binding site. D135 acts as the Proton acceptor in catalysis. S172 bears the Phosphoserine; by autocatalysis and IKKB mark. A Glycyl lysine isopeptide (Lys-Gly) (interchain with G-Cter in SUMO1) cross-link involves residue K231. The segment at 385 to 650 (SSDTPKGLAF…AQESLNKIFD (266 aa)) is interaction with DDX3X. K403 is covalently cross-linked (Glycyl lysine isopeptide (Lys-Gly) (interchain with G-Cter in ubiquitin)). Residues 452-473 (LQDTCQQTLEVTRTALLYLSSS) form a leucine-zipper region. The residue at position 503 (T503) is a Phosphothreonine. S665 is subject to Phosphoserine.

This sequence belongs to the protein kinase superfamily. Ser/Thr protein kinase family. I-kappa-B kinase subfamily. As to quaternary structure, homodimer. Interacts with MAVS/IPS1. Interacts (via protein kinase domain) with TTLL12 (via N-terminus); the interaction prevents MAVS binding to IKBKE. Interacts with the adapter proteins AZI2/NAP1, TANK and TBKBP1/SINTBAD. Interacts with SIKE1. Interacts with TICAM1/TRIF, IRF3 and RIGI; interactions are disrupted by the interaction between IKBKE and SIKE1. Interacts with TOPORS; induced by DNA damage. Interacts with CYLD, IKBKB, IKBKG and MYD88. Interacts with IFIH1. Interacts with DDX3X; the interaction may be induced upon virus infection. Interacts with TRIM6 (via SPRY box). Interacts with unanchored K48-linked polyubiquitin chains; this leads to IKBKE activation. Interacts with TBK1. Interacts with FKBP5. Sumoylation by TOPORS upon DNA damage is required for protection of cells against DNA damage-induced cell death. Desumoylated by SENP1. In terms of processing, autophosphorylated and phosphorylated by IKBKB/IKKB. Phosphorylation at Ser-172 is enhanced by the interaction with DDX3X. Phosphorylated at Thr-503 upon IFN activation. Post-translationally, 'Lys-63'-linked polyubiquitinated at Lys-30 and Lys-403 by TRAF2:BIRC2 and TRAF2:BIRC3 complexes. Ubiquitination is induced by LPS, TNFA and interleukin-1 and required for full kinase activity and KF-kappa-B pathway activation. As to expression, expressed in bone marrow-derived macrophages and at low levels in liver and white adipose tissue (at protein level). Detected in muscle and lung.

It localises to the cytoplasm. The protein localises to the nucleus. Its subcellular location is the PML body. The enzyme catalyses L-seryl-[I-kappa-B protein] + ATP = O-phospho-L-seryl-[I-kappa-B protein] + ADP + H(+). Its activity is regulated as follows. Kinase activity is inhibited competitively by amlexanox. In terms of biological role, serine/threonine kinase that plays an essential role in regulating inflammatory responses to viral infection, through the activation of the type I IFN, NF-kappa-B and STAT signaling. Also involved in TNFA and inflammatory cytokines, like Interleukin-1, signaling. Following activation of viral RNA sensors, such as RIG-I-like receptors, associates with DDX3X and phosphorylates interferon regulatory factors (IRFs), IRF3 and IRF7, as well as DDX3X. This activity allows subsequent homodimerization and nuclear translocation of the IRF3 leading to transcriptional activation of pro-inflammatory and antiviral genes including IFNB. In order to establish such an antiviral state, IKBKE forms several different complexes whose composition depends on the type of cell and cellular stimuli. Thus, several scaffolding molecules including IPS1/MAVS, TANK, AZI2/NAP1 or TBKBP1/SINTBAD can be recruited to the IKBKE-containing-complexes. Activated by polyubiquitination in response to TNFA and interleukin-1, regulates the NF-kappa-B signaling pathway through, at least, the phosphorylation of CYLD. Phosphorylates inhibitors of NF-kappa-B thus leading to the dissociation of the inhibitor/NF-kappa-B complex and ultimately the degradation of the inhibitor. In addition, is also required for the induction of a subset of ISGs which displays antiviral activity, may be through the phosphorylation of STAT1 at 'Ser-708'. Phosphorylation of STAT1 at 'Ser-708' also seems to promote the assembly and DNA binding of ISGF3 (STAT1:STAT2:IRF9) complexes compared to GAF (STAT1:STAT1) complexes, in this way regulating the balance between type I and type II IFN responses. Protects cells against DNA damage-induced cell death. Also plays an important role in energy balance regulation by sustaining a state of chronic, low-grade inflammation in obesity, wich leads to a negative impact on insulin sensitivity. Phosphorylates AKT1. This chain is Inhibitor of nuclear factor kappa-B kinase subunit epsilon (Ikbke), found in Mus musculus (Mouse).